The primary structure comprises 367 residues: Phosphoribosylaminoimidazole-succinocarboxamide synthase (367 aa).

Belongs to the SAICAR synthetase family.

It catalyses the reaction 5-amino-1-(5-phospho-D-ribosyl)imidazole-4-carboxylate + L-aspartate + ATP = (2S)-2-[5-amino-1-(5-phospho-beta-D-ribosyl)imidazole-4-carboxamido]succinate + ADP + phosphate + 2 H(+). The protein operates within purine metabolism; IMP biosynthesis via de novo pathway; 5-amino-1-(5-phospho-D-ribosyl)imidazole-4-carboxamide from 5-amino-1-(5-phospho-D-ribosyl)imidazole-4-carboxylate: step 1/2. The protein is Phosphoribosylaminoimidazole-succinocarboxamide synthase of Shewanella amazonensis (strain ATCC BAA-1098 / SB2B).